Here is a 441-residue protein sequence, read N- to C-terminus: MTTTRFAPSPTGYIHVGNLRTALMNYLIARKAGGTFILRIDDTDPERSKEEYVDAIKQDLEWLGITWDKVERQSERLDRYAEAADKLREIGRFYEAFETPTELDLKRKKQLNMGKPPVYDRAALALSDAEKESLRAERGNGVWRFKLDQERIEWTDGILGDISIDAASVSDPVLIRGDGQVLYTIASVVDDTDMGVTHVVRGSDHVTNTATQIQIMAALGHGHPEFAHHSLLTGPQGEALSKRLGTLALRDLREAGVKPMALLSLMARLGSSDPVELRTDMAELVDGFDINRFGSAPTKFDAEDLYPLTARYLQTLPVATVKSELDAIGVPADTQEAFWAVAKENITTLKDLEGWWILCRDGAEPLIADEDKEFIAEAMTLLPEGPYDSESWGKWTAAVKEKTGRKGKGLFMPLRKAVTGMERGPDMSALLALMQTVRARG.

The 'HIGH' region motif lies at 8-18 (PSPTGYIHVGN). The 'KMSKS' region motif lies at 239–243 (ALSKR). Residue Lys242 coordinates ATP.

It belongs to the class-I aminoacyl-tRNA synthetase family. Glutamate--tRNA ligase type 1 subfamily. Monomer.

Its subcellular location is the cytoplasm. The catalysed reaction is tRNA(Glu) + L-glutamate + ATP = L-glutamyl-tRNA(Glu) + AMP + diphosphate. In terms of biological role, catalyzes the attachment of glutamate to tRNA(Glu) in a two-step reaction: glutamate is first activated by ATP to form Glu-AMP and then transferred to the acceptor end of tRNA(Glu). The polypeptide is Glutamate--tRNA ligase 2 (Ruegeria sp. (strain TM1040) (Silicibacter sp.)).